Reading from the N-terminus, the 239-residue chain is Transcriptional regulatory protein DcuR (239 aa).

One can recognise a Response regulatory domain in the interval 3-121; the sequence is NVLIIDDDAM…RFEEALTGWR (119 aa). Asp-56 carries the 4-aspartylphosphate modification. Positions 181–200 form a DNA-binding region, H-T-H motif; it reads TDELANEVNISRVSCRKYLI.

Phosphorylated and activated by DcuS.

It is found in the cytoplasm. Member of the two-component regulatory system DcuR/DcuS. Involved in the C4-dicarboxylate-stimulated regulation of the genes encoding the anaerobic fumarate respiratory system (frdABCD; nuoAN; dcuB; dcuC; sdhCDAB; etc.). Weakly regulates the aerobic C4-dicarboxylate transporter dctA. In Shigella flexneri, this protein is Transcriptional regulatory protein DcuR (dcuR).